The following is a 155-amino-acid chain: SsrA-binding protein (155 aa).

This sequence belongs to the SmpB family.

It is found in the cytoplasm. Functionally, required for rescue of stalled ribosomes mediated by trans-translation. Binds to transfer-messenger RNA (tmRNA), required for stable association of tmRNA with ribosomes. tmRNA and SmpB together mimic tRNA shape, replacing the anticodon stem-loop with SmpB. tmRNA is encoded by the ssrA gene; the 2 termini fold to resemble tRNA(Ala) and it encodes a 'tag peptide', a short internal open reading frame. During trans-translation Ala-aminoacylated tmRNA acts like a tRNA, entering the A-site of stalled ribosomes, displacing the stalled mRNA. The ribosome then switches to translate the ORF on the tmRNA; the nascent peptide is terminated with the 'tag peptide' encoded by the tmRNA and targeted for degradation. The ribosome is freed to recommence translation, which seems to be the essential function of trans-translation. The chain is SsrA-binding protein from Streptococcus pyogenes serotype M5 (strain Manfredo).